The primary structure comprises 1013 residues: Poly [ADP-ribose] polymerase 1 (1013 aa).

A2 is modified (N-acetylalanine). The PARP-type 1 zinc finger occupies 9–93 (YRVEYAKSGR…KVKKTAEAGG (85 aa)). The Zn(2+) site is built by C21 and C24. S41 is subject to Phosphoserine. H53 and C56 together coordinate Zn(2+). Residues K97 and K105 each carry the N6-acetyllysine modification. Residues 113-203 (FAAEYAKSNR…VLKKQLPGVK (91 aa)) form a PARP-type 2 zinc finger. C125 and C128 together coordinate Zn(2+). K131 carries the N6-acetyllysine modification. Residues H159 and C162 each coordinate Zn(2+). 3 positions are modified to phosphoserine: S177, S179, and S185. A Glycyl lysine isopeptide (Lys-Gly) (interchain with G-Cter in SUMO2) cross-link involves residue K192. A disordered region spans residues 198 to 233 (QLPGVKSEGKRKGDEVDGADEVAKKKSKKGKDKDSK). A Glycyl lysine isopeptide (Lys-Gly) (interchain with G-Cter in SUMO1); alternate cross-link involves residue K203. Residue K203 forms a Glycyl lysine isopeptide (Lys-Gly) (interchain with G-Cter in SUMO2); alternate linkage. Short sequence motifs (nuclear localization signal) lie at residues 207-209 (KRK) and 221-226 (KKKSKK). Residues 225-359 (KKGKDKDSKL…VKKQDRIFPP (135 aa)) form the PADR1 zinc-binding domain. K249 is covalently cross-linked (Glycyl lysine isopeptide (Lys-Gly) (interchain with G-Cter in SUMO2)). Phosphoserine occurs at positions 274 and 277. Residues 290 to 332 (GALLPCKECSGQLVFKSDAYYCTGDVTAWTKCMVKTQTPSRKE) are zinc ribbon. Zn(2+) contacts are provided by C295, C298, C311, and C321. Residues 357-383 (FPPETSAPAPPHLPPSVTSAPTAVNSS) are disordered. A compositionally biased stretch (polar residues) spans 372–383 (SVTSAPTAVNSS). An automodification domain region spans residues 373-523 (VTSAPTAVNS…GVNKSEKRMK (151 aa)). Positions 385 to 476 (PADKPLSNMK…KSLQELLSAH (92 aa)) constitute a BRCT domain. PolyADP-ribosyl aspartic acid is present on D387. E407, E413, E435, E437, E444, E445, and E456 each carry polyADP-ribosyl glutamic acid. K467 is covalently cross-linked (Glycyl lysine isopeptide (Lys-Gly) (interchain with G-Cter in SUMO2)). E471 and E484 each carry polyADP-ribosyl glutamic acid. K486 is covalently cross-linked (Glycyl lysine isopeptide (Lys-Gly) (interchain with G-Cter in SUMO1); alternate). K486 is covalently cross-linked (Glycyl lysine isopeptide (Lys-Gly) (interchain with G-Cter in SUMO2); alternate). PolyADP-ribosyl glutamic acid is present on residues E488 and E491. The disordered stretch occupies residues 495–516 (PKGKSAAPSKKSKGLYKEEGVN). An ADP-ribosylserine mark is found at S499, S503, and S506. Residue K511 forms a Glycyl lysine isopeptide (Lys-Gly) (interchain with G-Cter in SUMO2) linkage. Residues E512 and E513 each carry the polyADP-ribosyl glutamic acid modification. S518 bears the ADP-ribosylserine mark. A PolyADP-ribosyl glutamic acid modification is found at E519. K520 carries the N6-(ADP-ribosyl)lysine modification. K527 is covalently cross-linked (Glycyl lysine isopeptide (Lys-Gly) (interchain with G-Cter in SUMO2)). The WGR domain maps to 541 to 637 (SAHVLEKGGK…KNFTKYPKKF (97 aa)). T593 carries the phosphothreonine modification. 2 positions are modified to N6-acetyllysine: K599 and K620. A PARP alpha-helical domain is found at 661–778 (KSKLPKAVQE…DIEVAYSLLR (118 aa)). Residue K747 forms a Glycyl lysine isopeptide (Lys-Gly) (interchain with G-Cter in SUMO1); alternate linkage. K747 is covalently cross-linked (Glycyl lysine isopeptide (Lys-Gly) (interchain with G-Cter in SUMO2); alternate). Phosphoserine occurs at positions 781 and 785. The PARP catalytic domain maps to 787-1013 (DPIDVNYEKL…LKFNFKTSLW (227 aa)). NAD(+) contacts are provided by residues 861–863 (HGS), G870, R877, and S903. E987 serves as the catalytic For poly [ADP-ribose] polymerase activity.

Belongs to the ARTD/PARP family. Homodimer; PARP-type zinc-fingers from separate PARP1 molecules form a dimer module that specifically recognizes DNA strand breaks. Heterodimer; heterodimerizes with PARP2. Interacts (via the PARP catalytic domain) with HPF1. Interacts with NMNAT1. Interacts with nucleosomes; with a preference for nucleosomes containing H2A.X. Interacts with APTX. Component of a base excision repair (BER) complex, containing at least XRCC1, PARP1, PARP2, POLB and LRIG3. Interacts with SRY. The SWAP complex consists of NPM1, NCL, PARP1 and SWAP70. Interacts with TIAM2. Interacts with PARP3; leading to activate PARP1 in absence of DNA. Interacts (when poly-ADP-ribosylated) with CHD1L (via macro domain). Interacts with the DNA polymerase alpha catalytic subunit POLA1; this interaction functions as part of the control of replication fork progression. Interacts with EEF1A1 and TXK. Interacts with RNF4. Interacts with RNF146. Interacts with ZNF423. Interacts with APLF. Interacts with SNAI1 (via zinc fingers); the interaction requires SNAI1 to be poly-ADP-ribosylated and non-phosphorylated (active) by GSK3B. Interacts (when poly-ADP-ribosylated) with PARP9. Interacts with NR4A3; activates PARP1 by improving acetylation of PARP1 and suppressing the interaction between PARP1 and SIRT1. Interacts (via catalytic domain) with PUM3; the interaction inhibits the poly-ADP-ribosylation activity of PARP1 and the degradation of PARP1 by CASP3 following genotoxic stress. Interacts with ZNF365. Interacts with RRP1B. Interacts with TIMELESS; the interaction is direct. Interacts with CGAS; leading to impede the formation of the PARP1-TIMELESS complex. Interacts with KHDC3L, the interaction is increased following the formation of DNA double-strand breaks. Interacts (when auto-poly-ADP-ribosylated) with XRCC1; leading to inhibit PARP1 ADP-ribosyltransferase activity. Interacts with SPINDOC; promoting PARP1 ADP-ribosyltransferase activity. Interacts with BANF1; leading to inhibit PARP1 ADP-ribosyltransferase activity in response to oxidative DNA damage. Interacts (when sumoylated and ubiquitinated) with VCP/p97; leading to its extraction from chromatin. Interacts with YARS1; promoting PARP1 ADP-ribosyltransferase activity. Interacts with PACMP micropeptide; Interacts with PACMP micropeptide; interaction. Interacts (when poly-ADP-ribosylated) with isoform 1 of MACROH2A1; MACROH2A1 specifically binds to poly-ADP-ribose chains and inhibits PARP1 activity, limiting the consumption of nuclear NAD(+). Interacts with CARM1; promoting recruitment to replication forks. Interacts with RECQL. Interacts with ZNF32; the interaction reshapes ZNF432 interacting proteins. Interacts with TPRN; TPRN interacts with a number of DNA damage response proteins, is recruited to sites of DNA damage and may play a role in DNA damage repair. As to quaternary structure, interacts (when auto-poly-ADP-ribosylated) with AIFM1. In terms of processing, poly-ADP-ribosylated on serine, glutamate and aspartate residues by autocatalysis. Auto-ADP-ribosylation on serine takes place following interaction with HPF1. Auto poly-ADP-ribosylation on serine residues promotes its dissociation from chromatin. Poly-ADP-ribosylated by PARP2; poly-ADP-ribosylation mediates the recruitment of CHD1L to DNA damage sites. Mono-ADP-ribosylated at Lys-520 by SIRT6 in response to oxidative stress, promoting recruitment to double-strand breaks (DSBs) sites. S-nitrosylated, leading to inhibit transcription regulation activity. Post-translationally, phosphorylated at Thr-593 by PRKDC in response to DNA damage following virus infection, promoting its translocation to the cytosol. Phosphorylated by TXK. In terms of processing, proteolytically cleaved by caspase-3 (CASP3) and caspase-7 (CASP7) in response to apoptosis to generate the Poly [ADP-ribose] polymerase 1, processed N-terminus and Poly [ADP-ribose] polymerase 1, processed C-terminus forms. Sumoylated with SUMO1 or SUMO2 by PIAS4 following prolonged residence (trapping) to chromatin. Sumoylation promotes ubiquitination by RNF4 and removal from chromatin by VCP/p97. Post-translationally, ubiquitinated by RNF4 following sumoylation by PIAS4 in response to prolonged residence (trapping) to chromatin. Ubiquitination promotes removal from chromatin by VCP/p97.

The protein resides in the chromosome. It localises to the nucleus. The protein localises to the nucleolus. It is found in the cytoplasm. Its subcellular location is the cytosol. The catalysed reaction is NAD(+) + (ADP-D-ribosyl)n-acceptor = nicotinamide + (ADP-D-ribosyl)n+1-acceptor + H(+).. It carries out the reaction L-seryl-[protein] + NAD(+) = O-(ADP-D-ribosyl)-L-seryl-[protein] + nicotinamide + H(+). The enzyme catalyses L-aspartyl-[protein] + NAD(+) = 4-O-(ADP-D-ribosyl)-L-aspartyl-[protein] + nicotinamide. It catalyses the reaction L-glutamyl-[protein] + NAD(+) = 5-O-(ADP-D-ribosyl)-L-glutamyl-[protein] + nicotinamide. The catalysed reaction is L-tyrosyl-[protein] + NAD(+) = O-(ADP-D-ribosyl)-L-tyrosyl-[protein] + nicotinamide + H(+). It carries out the reaction L-histidyl-[protein] + NAD(+) = N(tele)-(ADP-D-ribosyl)-L-histidyl-[protein] + nicotinamide + H(+). ADP-ribosyltransferase activity is regulated via an allosteric activation mechanism. In absence of activation signal, PARP1 is autoinhibited by the PARP alpha-helical domain (also named HD region), which prevents effective NAD(+)-binding. Activity is highly stimulated by signals, such as DNA strand breaks. Binding to damaged DNA unfolds the PARP alpha-helical domain, relieving autoinhibition. Poly-ADP-ribosyltransferase activity is tightly regulated and PARP1 is removed from damaged chromatin following initial poly-ADP-ribosylation of chromatin to avoid prolonged residence (trapping) that has cytotoxic consequences. A number of factors (VCP/p97) or post-translational modifications (auto-poly-ADP-ribosylation or ubiquitination) promote PARP1 removal from chromatin. In terms of biological role, poly-ADP-ribosyltransferase that mediates poly-ADP-ribosylation of proteins and plays a key role in DNA repair. Mediates glutamate, aspartate, serine, histidine or tyrosine ADP-ribosylation of proteins: the ADP-D-ribosyl group of NAD(+) is transferred to the acceptor carboxyl group of target residues and further ADP-ribosyl groups are transferred to the 2'-position of the terminal adenosine moiety, building up a polymer with an average chain length of 20-30 units. Serine ADP-ribosylation of proteins constitutes the primary form of ADP-ribosylation of proteins in response to DNA damage. Specificity for the different amino acids is conferred by interacting factors, such as HPF1 and NMNAT1. Following interaction with HPF1, catalyzes serine ADP-ribosylation of target proteins; HPF1 confers serine specificity by completing the PARP1 active site. Also catalyzes tyrosine ADP-ribosylation of target proteins following interaction with HPF1. Following interaction with NMNAT1, catalyzes glutamate and aspartate ADP-ribosylation of target proteins; NMNAT1 confers glutamate and aspartate specificity. PARP1 initiates the repair of DNA breaks: recognizes and binds DNA breaks within chromatin and recruits HPF1, licensing serine ADP-ribosylation of target proteins, such as histones (H2BS6ADPr and H3S10ADPr), thereby promoting decompaction of chromatin and the recruitment of repair factors leading to the reparation of DNA strand breaks. HPF1 initiates serine ADP-ribosylation but restricts the polymerase activity of PARP1 in order to limit the length of poly-ADP-ribose chains. In addition to base excision repair (BER) pathway, also involved in double-strand breaks (DSBs) repair: together with TIMELESS, accumulates at DNA damage sites and promotes homologous recombination repair by mediating poly-ADP-ribosylation. Mediates the poly-ADP-ribosylation of a number of proteins, including itself, APLF, CHFR and NFAT5. In addition to proteins, also able to ADP-ribosylate DNA: catalyzes ADP-ribosylation of DNA strand break termini containing terminal phosphates and a 2'-OH group in single- and double-stranded DNA, respectively. Required for PARP9 and DTX3L recruitment to DNA damage sites. PARP1-dependent PARP9-DTX3L-mediated ubiquitination promotes the rapid and specific recruitment of 53BP1/TP53BP1, UIMC1/RAP80, and BRCA1 to DNA damage sites. PARP1-mediated DNA repair in neurons plays a role in sleep: senses DNA damage in neurons and promotes sleep, facilitating efficient DNA repair. In addition to DNA repair, also involved in other processes, such as transcription regulation, programmed cell death, membrane repair, adipogenesis and innate immunity. Acts as a repressor of transcription: binds to nucleosomes and modulates chromatin structure in a manner similar to histone H1, thereby altering RNA polymerase II. Acts both as a positive and negative regulator of transcription elongation, depending on the context. Acts as a positive regulator of transcription elongation by mediating poly-ADP-ribosylation of NELFE, preventing RNA-binding activity of NELFE and relieving transcription pausing. Acts as a negative regulator of transcription elongation in response to DNA damage by catalyzing poly-ADP-ribosylation of CCNT1, disrupting the phase separation activity of CCNT1 and subsequent activation of CDK9. Involved in replication fork progression following interaction with CARM1: mediates poly-ADP-ribosylation at replication forks, slowing fork progression. Poly-ADP-ribose chains generated by PARP1 also play a role in poly-ADP-ribose-dependent cell death, a process named parthanatos. Also acts as a negative regulator of the cGAS-STING pathway. Acts by mediating poly-ADP-ribosylation of CGAS: PARP1 translocates into the cytosol following phosphorylation by PRKDC and catalyzes poly-ADP-ribosylation and inactivation of CGAS. Acts as a negative regulator of adipogenesis: catalyzes poly-ADP-ribosylation of histone H2B on 'Glu-35' (H2BE35ADPr) following interaction with NMNAT1, inhibiting phosphorylation of H2B at 'Ser-36' (H2BS36ph), thereby blocking expression of pro-adipogenetic genes. Involved in the synthesis of ATP in the nucleus, together with NMNAT1, PARG and NUDT5. Nuclear ATP generation is required for extensive chromatin remodeling events that are energy-consuming. Promotes AIFM1-mediated apoptosis. This form, which translocates into the cytoplasm following cleavage by caspase-3 (CASP3) and caspase-7 (CASP7) in response to apoptosis, is auto-poly-ADP-ribosylated and serves as a poly-ADP-ribose carrier to induce AIFM1-mediated apoptosis. Functionally, this cleavage form irreversibly binds to DNA breaks and interferes with DNA repair, promoting DNA damage-induced apoptosis. This Cricetulus griseus (Chinese hamster) protein is Poly [ADP-ribose] polymerase 1 (PARP1).